A 629-amino-acid polypeptide reads, in one-letter code: Endoglucanase 15 (629 aa).

The first 30 residues, 1 to 30 (MAKNGGAHGAATLFGLLALASMVKLGFVAG), serve as a signal peptide directing secretion. D87 functions as the Nucleophile in the catalytic mechanism. Active-site residues include H421, D473, and E482. N520, N540, and N561 each carry an N-linked (GlcNAc...) asparagine glycan.

This sequence belongs to the glycosyl hydrolase 9 (cellulase E) family.

It is found in the secreted. It carries out the reaction Endohydrolysis of (1-&gt;4)-beta-D-glucosidic linkages in cellulose, lichenin and cereal beta-D-glucans.. This is Endoglucanase 15 from Oryza sativa subsp. japonica (Rice).